The chain runs to 236 residues: MQNFHPRHFAIVPAAGSGSRMGSERPKQYLPLLGKPLIYHTLSVLCAAPEIDKVFVVLSVGDAEWGRHDWRALGPKLVPLFCGGPTRADSVLAGLRAIAGEAVQSDWVLVHDAARPCLAPWHIDKLVRELAGDEVGGLLAVPVADTLKRADGHRHVAATVPRDSLWQAQTPQMFRYVMLRRALESATDVTDEASAIEAAGLRPRLVQGDATNLKVTYPLDLHLAEWILNNRTGVQQ.

It belongs to the IspD/TarI cytidylyltransferase family. IspD subfamily.

The enzyme catalyses 2-C-methyl-D-erythritol 4-phosphate + CTP + H(+) = 4-CDP-2-C-methyl-D-erythritol + diphosphate. The protein operates within isoprenoid biosynthesis; isopentenyl diphosphate biosynthesis via DXP pathway; isopentenyl diphosphate from 1-deoxy-D-xylulose 5-phosphate: step 2/6. Functionally, catalyzes the formation of 4-diphosphocytidyl-2-C-methyl-D-erythritol from CTP and 2-C-methyl-D-erythritol 4-phosphate (MEP). The chain is 2-C-methyl-D-erythritol 4-phosphate cytidylyltransferase from Azoarcus sp. (strain BH72).